The chain runs to 78 residues: MKLTCMMIVAVLFLTAWTFATADDSGNGLENLFSNAHHQMKNPEASKLNKRWCKQSGEMCNLLDQNCCDGYCIVFVCT.

A signal peptide spans 1 to 22 (MKLTCMMIVAVLFLTAWTFATA). Residues 23–49 (DDSGNGLENLFSNAHHQMKNPEASKLN) constitute a propeptide that is removed on maturation. 3 disulfides stabilise this stretch: Cys-53/Cys-68, Cys-60/Cys-72, and Cys-67/Cys-77.

It belongs to the conotoxin O1 superfamily. Expressed by the venom duct.

It is found in the secreted. In terms of biological role, delta-conotoxins bind to site 6 of voltage-gated sodium channels (Nav) and inhibit the inactivation process. This chain is Delta-conotoxin-like TxMKLT1-0111, found in Conus textile (Cloth-of-gold cone).